The primary structure comprises 637 residues: Chaperone protein HtpG (637 aa).

An a; substrate-binding region spans residues Met-1–Arg-345. Residues Glu-346–Lys-562 are b. Residues Leu-563–Lys-637 form a c region.

It belongs to the heat shock protein 90 family. As to quaternary structure, homodimer.

The protein localises to the cytoplasm. Functionally, molecular chaperone. Has ATPase activity. This Shewanella sp. (strain MR-4) protein is Chaperone protein HtpG.